We begin with the raw amino-acid sequence, 201 residues long: MGSTETELKRILSDLNVTPLLLGTYDKRFPGFVSKAKPCPIVNTAFGETGGEHWIAMAWYPPNNSFYMFDPFGFSDQKLKQIYDFEYQGLLRRSALTSSKDRCVQLIRSTDTVQGPNSAGCGLFGGLFLKSFACNPARPRNGNPIIDIVRGVPNERFTDPSSLPILYRNQENMYAFLENNSPYFVSHEREIKRKTAFDYIQ.

Active-site residues include H53, D70, and C121.

Belongs to the peptidase C5 family. Interacts with protease cofactor pVI-C; this interaction is necessary for protease activation.

It localises to the virion. Its subcellular location is the host nucleus. The catalysed reaction is Cleaves proteins of the adenovirus and its host cell at two consensus sites: -Yaa-Xaa-Gly-Gly-|-Xaa- and -Yaa-Xaa-Gly-Xaa-|-Gly- (in which Yaa is Met, Ile or Leu, and Xaa is any amino acid).. With respect to regulation, requires DNA and protease cofactor for maximal activation. Inside nascent virions, becomes partially activated by binding to the viral DNA, allowing it to cleave the cofactor that binds to the protease and fully activates it. Actin, like the viral protease cofactor, seems to act as a cofactor in the cleavage of cytokeratin 18 and of actin itself. Cleaves viral precursor proteins (pTP, pIIIa, pVI, pVII, pVIII, and pX) inside newly assembled particles giving rise to mature virions. Protease complexed to its cofactor slides along the viral DNA to specifically locate and cleave the viral precursors. Mature virions have a weakened organization compared to the unmature virions, thereby facilitating subsequent uncoating. Without maturation, the particle lacks infectivity and is unable to uncoat. Late in adenovirus infection, in the cytoplasm, may participate in the cytoskeleton destruction. Cleaves host cell cytoskeletal keratins K7 and K18. The sequence is that of Protease from Equine adenovirus B serotype 2 (EAdV-2).